The primary structure comprises 63 residues: Large ribosomal subunit protein uL29 (63 aa).

It belongs to the universal ribosomal protein uL29 family.

In Vibrio cholerae serotype O1 (strain ATCC 39541 / Classical Ogawa 395 / O395), this protein is Large ribosomal subunit protein uL29.